A 156-amino-acid chain; its full sequence is ATP synthase subunit b (156 aa).

The chain crosses the membrane as a helical span at residues 3-23; the sequence is ITLTIFAQALAFAGLIWIVAT.

This sequence belongs to the ATPase B chain family. F-type ATPases have 2 components, F(1) - the catalytic core - and F(0) - the membrane proton channel. F(1) has five subunits: alpha(3), beta(3), gamma(1), delta(1), epsilon(1). F(0) has three main subunits: a(1), b(2) and c(10-14). The alpha and beta chains form an alternating ring which encloses part of the gamma chain. F(1) is attached to F(0) by a central stalk formed by the gamma and epsilon chains, while a peripheral stalk is formed by the delta and b chains.

It localises to the cell inner membrane. In terms of biological role, f(1)F(0) ATP synthase produces ATP from ADP in the presence of a proton or sodium gradient. F-type ATPases consist of two structural domains, F(1) containing the extramembraneous catalytic core and F(0) containing the membrane proton channel, linked together by a central stalk and a peripheral stalk. During catalysis, ATP synthesis in the catalytic domain of F(1) is coupled via a rotary mechanism of the central stalk subunits to proton translocation. Its function is as follows. Component of the F(0) channel, it forms part of the peripheral stalk, linking F(1) to F(0). The protein is ATP synthase subunit b of Xanthomonas oryzae pv. oryzae (strain MAFF 311018).